The primary structure comprises 865 residues: Nitrogen regulatory protein nrfA (865 aa).

Disordered stretches follow at residues 1–75, 115–140, 177–227, 557–605, and 617–663; these read MEGI…DEMQ, RKEREQQEREQQARASETVSPAPSGI, FDSP…QDQR, GSTD…RTAS, and LNGS…AGPT. Over residues 32-46 the composition is skewed to low complexity; it reads DDFTFDSPFSSSGSS. Basic and acidic residues-rich tracts occupy residues 115–126 and 180–189; these read RKEREQQEREQQ and PAEHPSHPSA. Over residues 582–592 the composition is skewed to polar residues; sequence ASVSDVRNQNQ. Residues 665-689 form a GATA-type zinc finger; it reads CTNCFTQTTPLWRRNPEGQPLCNAC. The interval 713-854 is disordered; that stretch reads NRSSANTLAV…NHSIAGGQGA (142 aa). Polar residues-rich tracts occupy residues 715–724 and 737–764; these read SSANTLAVGT and IQHAPSTSISSRINTSESPPSMTGSNTL. Low complexity-rich tracts occupy residues 771–786 and 830–844; these read PIAAAPPKSGPPAGVA and PLAPAMAPPAAANPA.

The protein localises to the nucleus. Its function is as follows. Major nitrogen regulatory protein. This is Nitrogen regulatory protein nrfA (nrfA) from Penicillium urticae.